Consider the following 185-residue polypeptide: Threonylcarbamoyl-AMP synthase (185 aa).

A YrdC-like domain is found at 4–185 (SFRAQCAARV…LVTGQVIRPA (182 aa)).

The protein belongs to the SUA5 family. TsaC subfamily.

The protein localises to the cytoplasm. The catalysed reaction is L-threonine + hydrogencarbonate + ATP = L-threonylcarbamoyladenylate + diphosphate + H2O. Required for the formation of a threonylcarbamoyl group on adenosine at position 37 (t(6)A37) in tRNAs that read codons beginning with adenine. Catalyzes the conversion of L-threonine, HCO(3)(-)/CO(2) and ATP to give threonylcarbamoyl-AMP (TC-AMP) as the acyladenylate intermediate, with the release of diphosphate. This is Threonylcarbamoyl-AMP synthase from Pseudomonas paraeruginosa (strain DSM 24068 / PA7) (Pseudomonas aeruginosa (strain PA7)).